The chain runs to 260 residues: MKTSDYLKKYGVKLKKHLGQVFLSDDRIAKRIVKEVGLTPEDVVVEIGAGAGTLTEELAKTGARVIAYEIDESLAPVLRERLSKYPNVELRFEDFLKAKDIPEGAICVSNIPYSITGPIMEKIIEWKFKRAIVMVQKEVGERILAKPGKKTYGYLSVVVQTFYEVKKLFDVSRSCFVPNPEVDSTVVDLRRKSVDLDFEKFRKFVSMIFAKKRKTLKNNLRPFLSVFEGVDLSRRAEQLTVEEIVEFYEKWRRALECSKE.

The S-adenosyl-L-methionine site is built by L23, G48, E69, D94, and N110.

It belongs to the class I-like SAM-binding methyltransferase superfamily. rRNA adenine N(6)-methyltransferase family. RsmA subfamily.

The protein localises to the cytoplasm. The enzyme catalyses adenosine(1518)/adenosine(1519) in 16S rRNA + 4 S-adenosyl-L-methionine = N(6)-dimethyladenosine(1518)/N(6)-dimethyladenosine(1519) in 16S rRNA + 4 S-adenosyl-L-homocysteine + 4 H(+). In terms of biological role, specifically dimethylates two adjacent adenosines (A1518 and A1519) in the loop of a conserved hairpin near the 3'-end of 16S rRNA in the 30S particle. May play a critical role in biogenesis of 30S subunits. The polypeptide is Ribosomal RNA small subunit methyltransferase A (Thermotoga petrophila (strain ATCC BAA-488 / DSM 13995 / JCM 10881 / RKU-1)).